The following is a 227-amino-acid chain: Probable methylthioribulose-1-phosphate dehydratase (227 aa).

Residue C87 coordinates substrate. Positions 105 and 107 each coordinate Zn(2+). Residue E129 is the Proton donor/acceptor of the active site. Zn(2+) is bound at residue H185.

This sequence belongs to the aldolase class II family. MtnB subfamily. Requires Zn(2+) as cofactor.

The protein localises to the cytoplasm. The catalysed reaction is 5-(methylsulfanyl)-D-ribulose 1-phosphate = 5-methylsulfanyl-2,3-dioxopentyl phosphate + H2O. Its pathway is amino-acid biosynthesis; L-methionine biosynthesis via salvage pathway; L-methionine from S-methyl-5-thio-alpha-D-ribose 1-phosphate: step 2/6. Catalyzes the dehydration of methylthioribulose-1-phosphate (MTRu-1-P) into 2,3-diketo-5-methylthiopentyl-1-phosphate (DK-MTP-1-P). The sequence is that of Probable methylthioribulose-1-phosphate dehydratase from Drosophila erecta (Fruit fly).